The chain runs to 666 residues: UvrABC system protein B (666 aa).

The Helicase ATP-binding domain occupies 26–414; that stretch reads DSFQKGEKKV…KVVEQIIRPT (389 aa). Position 39-46 (39-46) interacts with ATP; the sequence is GVTGSGKT. The Beta-hairpin signature appears at 92-115; it reads YYDYYQPEAYVPSSDTFIEKDSSI. The 163-residue stretch at 429–591 folds into the Helicase C-terminal domain; sequence QIEDLLVEIR…ITPLTIKKEV (163 aa). Residues 625-660 enclose the UVR domain; it reads EVLKEKLREEMMKAAKELDFERAAILRDKMLSIQTE.

This sequence belongs to the UvrB family. In terms of assembly, forms a heterotetramer with UvrA during the search for lesions. Interacts with UvrC in an incision complex.

The protein resides in the cytoplasm. In terms of biological role, the UvrABC repair system catalyzes the recognition and processing of DNA lesions. A damage recognition complex composed of 2 UvrA and 2 UvrB subunits scans DNA for abnormalities. Upon binding of the UvrA(2)B(2) complex to a putative damaged site, the DNA wraps around one UvrB monomer. DNA wrap is dependent on ATP binding by UvrB and probably causes local melting of the DNA helix, facilitating insertion of UvrB beta-hairpin between the DNA strands. Then UvrB probes one DNA strand for the presence of a lesion. If a lesion is found the UvrA subunits dissociate and the UvrB-DNA preincision complex is formed. This complex is subsequently bound by UvrC and the second UvrB is released. If no lesion is found, the DNA wraps around the other UvrB subunit that will check the other stand for damage. In Leptospira interrogans serogroup Icterohaemorrhagiae serovar copenhageni (strain Fiocruz L1-130), this protein is UvrABC system protein B.